Consider the following 248-residue polypeptide: Metallo-beta-lactamase type 2 (248 aa).

A signal peptide spans 1 to 21; sequence MKRLKGLLVLALGFTGLQVFG. Residues histidine 97, histidine 99, aspartate 101, histidine 160, and cysteine 179 each contribute to the Zn(2+) site. A substrate-binding site is contributed by lysine 182. Residue histidine 221 participates in Zn(2+) binding.

This sequence belongs to the metallo-beta-lactamase superfamily. Class-B beta-lactamase family. In terms of assembly, monomer. Zn(2+) is required as a cofactor.

The protein localises to the periplasm. The catalysed reaction is a beta-lactam + H2O = a substituted beta-amino acid. In terms of biological role, confers resistance to the different beta-lactams antibiotics (penicillin, cephalosporin and carbapenem) via the hydrolysis of the beta-lactam ring. The polypeptide is Metallo-beta-lactamase type 2 (blaB6) (Elizabethkingia meningoseptica (Chryseobacterium meningosepticum)).